A 381-amino-acid chain; its full sequence is Acetylornithine deacetylase (381 aa).

Position 79 (H79) interacts with Zn(2+). Residue D81 is part of the active site. D111 is a binding site for Zn(2+). Residue E143 is part of the active site. The Zn(2+) site is built by E144, E168, and H354.

It belongs to the peptidase M20A family. ArgE subfamily. As to quaternary structure, homodimer. It depends on Zn(2+) as a cofactor. The cofactor is Co(2+). Requires glutathione as cofactor.

The protein localises to the cytoplasm. It catalyses the reaction N(2)-acetyl-L-ornithine + H2O = L-ornithine + acetate. It functions in the pathway amino-acid biosynthesis; L-arginine biosynthesis; L-ornithine from N(2)-acetyl-L-ornithine (linear): step 1/1. Functionally, catalyzes the hydrolysis of the amide bond of N(2)-acetylated L-amino acids. Cleaves the acetyl group from N-acetyl-L-ornithine to form L-ornithine, an intermediate in L-arginine biosynthesis pathway, and a branchpoint in the synthesis of polyamines. The polypeptide is Acetylornithine deacetylase (Buchnera aphidicola subsp. Acyrthosiphon pisum (strain APS) (Acyrthosiphon pisum symbiotic bacterium)).